The sequence spans 24 residues: Coenzyme PQQ synthesis protein A (24 aa).

The segment at residues 16-20 (EVTMY) is a cross-link (pyrroloquinoline quinone (Glu-Tyr)).

Belongs to the PqqA family.

It functions in the pathway cofactor biosynthesis; pyrroloquinoline quinone biosynthesis. Required for coenzyme pyrroloquinoline quinone (PQQ) biosynthesis. PQQ is probably formed by cross-linking a specific glutamate to a specific tyrosine residue and excising these residues from the peptide. This Methylococcus capsulatus (strain ATCC 33009 / NCIMB 11132 / Bath) protein is Coenzyme PQQ synthesis protein A.